A 296-amino-acid chain; its full sequence is Ribose import binding protein RbsB (296 aa).

Positions M1–A25 are cleaved as a signal peptide.

The protein belongs to the bacterial solute-binding protein 2 family. As to quaternary structure, the complex is composed of an ATP-binding protein (RbsA), two transmembrane proteins (RbsC) and a solute-binding protein (RbsB).

The protein resides in the periplasm. Its function is as follows. Part of the ABC transporter complex RbsABC involved in ribose import. Binds ribose. This Salmonella typhi protein is Ribose import binding protein RbsB (rbsB).